The sequence spans 272 residues: uncharacterized protein (272 aa).

A signal peptide spans 1–20 (MMEPKSIFLLGLLLFRVGKL).

This is an uncharacterized protein from Caenorhabditis elegans.